The chain runs to 97 residues: MRQSANLVRKHIVVTGLVQGVGFRYFTVTQARRLGVQGWVRNCRDGSVELEAQGSSDAVQALVEQLAIGPRWSEVSHVAVHDMPIIDETARAFGVRQ.

The Acylphosphatase-like domain occupies 9-97 (RKHIVVTGLV…ETARAFGVRQ (89 aa)). Residues Arg24 and Asn42 contribute to the active site.

Belongs to the acylphosphatase family.

It catalyses the reaction an acyl phosphate + H2O = a carboxylate + phosphate + H(+). The polypeptide is Acylphosphatase (acyP) (Bifidobacterium longum (strain NCC 2705)).